Here is a 212-residue protein sequence, read N- to C-terminus: Large ribosomal subunit protein uL1 (212 aa).

It belongs to the universal ribosomal protein uL1 family. As to quaternary structure, part of the 50S ribosomal subunit.

Binds directly to 23S rRNA. Probably involved in E site tRNA release. Its function is as follows. Protein L1 is also a translational repressor protein, it controls the translation of its operon by binding to its mRNA. This chain is Large ribosomal subunit protein uL1, found in Methanobrevibacter smithii (strain ATCC 35061 / DSM 861 / OCM 144 / PS).